Here is a 160-residue protein sequence, read N- to C-terminus: MAFTFAAFCYMLTLVLCAALIFFVIWQIIAFDELRTDFKNPIDQSNPTRARERILNIERICNLLRRLVVPEYSIHGLFCLMFMCAGEWVTLGLNIPLLLYHLWRFFHRPADGSEVMYDPVSVMNADILNYCQKESWCKLGFYLLSFFYYLYSMVYALVSF.

Residues 1-10 (MAFTFAAFCY) are Cytoplasmic-facing. Residues 11–31 (MLTLVLCAALIFFVIWQIIAF) traverse the membrane as a helical segment. Residues 32-72 (DELRTDFKNPIDQSNPTRARERILNIERICNLLRRLVVPEY) are Lumenal-facing. The chain crosses the membrane as a helical span at residues 73-93 (SIHGLFCLMFMCAGEWVTLGL). At 94–138 (NIPLLLYHLWRFFHRPADGSEVMYDPVSVMNADILNYCQKESWCK) the chain is on the cytoplasmic side. Residues 139-159 (LGFYLLSFFYYLYSMVYALVS) traverse the membrane as a helical segment. Position 160 (phenylalanine 160) is a topological domain, lumenal.

It belongs to the cornichon family.

It is found in the membrane. Regulates the trafficking and gating properties of AMPA-selective glutamate receptors (AMPARs). This is Protein cornichon homolog 2 (cnih2) from Danio rerio (Zebrafish).